The sequence spans 280 residues: Shikimate dehydrogenase (NADP(+)) (280 aa).

Shikimate-binding positions include 18–20 and Thr65; that span reads SRS. Lys69 (proton acceptor) is an active-site residue. Residues Asn90 and Asp105 each coordinate shikimate. Residues 130–134, 154–159, and Leu219 each bind NADP(+); these read GAGGA and NRTLAR. A shikimate-binding site is contributed by Tyr221. Residue Gly242 participates in NADP(+) binding.

It belongs to the shikimate dehydrogenase family. Homodimer.

It carries out the reaction shikimate + NADP(+) = 3-dehydroshikimate + NADPH + H(+). Its pathway is metabolic intermediate biosynthesis; chorismate biosynthesis; chorismate from D-erythrose 4-phosphate and phosphoenolpyruvate: step 4/7. Its function is as follows. Involved in the biosynthesis of the chorismate, which leads to the biosynthesis of aromatic amino acids. Catalyzes the reversible NADPH linked reduction of 3-dehydroshikimate (DHSA) to yield shikimate (SA). The protein is Shikimate dehydrogenase (NADP(+)) of Mesorhizobium japonicum (strain LMG 29417 / CECT 9101 / MAFF 303099) (Mesorhizobium loti (strain MAFF 303099)).